Consider the following 38-residue polypeptide: Photosystem II reaction center protein L (38 aa).

The helical transmembrane segment at 17-37 (SLFWGLLLIFVLAILFSNYFF) threads the bilayer.

It belongs to the PsbL family. As to quaternary structure, PSII is composed of 1 copy each of membrane proteins PsbA, PsbB, PsbC, PsbD, PsbE, PsbF, PsbH, PsbI, PsbJ, PsbK, PsbL, PsbM, PsbT, PsbX, PsbY, PsbZ, Psb30/Ycf12, at least 3 peripheral proteins of the oxygen-evolving complex and a large number of cofactors. It forms dimeric complexes.

The protein resides in the plastid. Its subcellular location is the chloroplast thylakoid membrane. One of the components of the core complex of photosystem II (PSII). PSII is a light-driven water:plastoquinone oxidoreductase that uses light energy to abstract electrons from H(2)O, generating O(2) and a proton gradient subsequently used for ATP formation. It consists of a core antenna complex that captures photons, and an electron transfer chain that converts photonic excitation into a charge separation. This subunit is found at the monomer-monomer interface and is required for correct PSII assembly and/or dimerization. The sequence is that of Photosystem II reaction center protein L from Chara vulgaris (Common stonewort).